The primary structure comprises 279 residues: Protoheme IX farnesyltransferase (279 aa).

9 helical membrane-spanning segments follow: residues 1-21, 29-49, 79-99, 101-121, 128-148, 156-176, 200-220, 225-245, and 254-274; these read MIKPGIILGNIICLSGGFFLA, IFFLKTVFGLILIISSSCILN, ILFFFSIILLILGLLVFYIYI, FLCTIISFFGFFFYVYLYSYL, FSTFVGSVSGSLPPIIGYVAV, CTILFFMFSFWQIAHSYSIII, IIFISICILNLFFFNFLLYFF, FFYFLYTSFFIFLWFIFSFLS, and IWSRIMFFFSIFIIFMISFLM.

This sequence belongs to the UbiA prenyltransferase family. Protoheme IX farnesyltransferase subfamily.

Its subcellular location is the cell membrane. The enzyme catalyses heme b + (2E,6E)-farnesyl diphosphate + H2O = Fe(II)-heme o + diphosphate. It participates in porphyrin-containing compound metabolism; heme O biosynthesis; heme O from protoheme: step 1/1. Its function is as follows. Converts heme B (protoheme IX) to heme O by substitution of the vinyl group on carbon 2 of heme B porphyrin ring with a hydroxyethyl farnesyl side group. The sequence is that of Protoheme IX farnesyltransferase from Buchnera aphidicola subsp. Cinara cedri (strain Cc).